Here is a 921-residue protein sequence, read N- to C-terminus: Inner nuclear membrane protein Man1 (921 aa).

Positions 7 to 51 constitute an LEM domain; it reads AAAPQQLSDEELFSQLRRYGLSPGPVTESTRPVYLKKLKKLREEE. Ser-28 is modified (phosphoserine). 3 disordered regions span residues 47–97, 136–357, and 374–395; these read LREE…AYLR, SSDE…GGCG, and LAPL…PTGP. Composition is skewed to low complexity over residues 53–62 and 72–85; these read QQQQQQQQQQ and TRNS…TAMG. Phosphoserine is present on residues Ser-136, Ser-137, and Ser-140. Over residues 217–237 the composition is skewed to acidic residues; the sequence is AAEDADEELADGEDRDPEAEE. A phosphoserine mark is found at Ser-261, Ser-263, and Ser-287. Residues 263-275 show a composition bias toward acidic residues; the sequence is SEEEEEEGEEDGD. Polar residues predominate over residues 308-317; sequence SGGSRQETSV. Over residues 348–357 the composition is skewed to gly residues; that stretch reads PGGGGGGGCG. The residue at position 412 (Ser-412) is a Phosphoserine. 2 helical membrane passes run 486-506 and 637-657; these read MFLL…YLGM and AFIT…LVCV. An interaction with SMAD1, SMAD2, SMAD3 and SMAD5 region spans residues 709-921; it reads VRDSLIQPQD…TGLANSQGSS (213 aa). A DNA-binding region spans residues 717 to 736; sequence QDRKKMKKVWDRAVDFLAAN. A Phosphoserine modification is found at Ser-787. Thr-893 carries the phosphothreonine modification. The residue at position 921 (Ser-921) is a Phosphoserine.

Interacts with SMAD1, SMAD2, SMAD3 and SMAD5. Binds to both phosphorylated and unphosphorylated R-SMADS.

The protein resides in the nucleus inner membrane. Its function is as follows. Can function as a specific repressor of TGF-beta, activin, and BMP signaling through its interaction with the R-SMAD proteins. Antagonizes TGF-beta-induced cell proliferation arrest. This Mus musculus (Mouse) protein is Inner nuclear membrane protein Man1 (Lemd3).